We begin with the raw amino-acid sequence, 342 residues long: Acetoin:2,6-dichlorophenolindophenol oxidoreductase subunit beta (342 aa).

In terms of assembly, tetramer of 2 alpha and 2 beta subunits.

It participates in ketone degradation; acetoin degradation. Its function is as follows. Catalyzes the 2,6-dichlorophenolindophenol-dependent cleavage of acetoin into acetate and acetaldehyde. In Bacillus subtilis (strain 168), this protein is Acetoin:2,6-dichlorophenolindophenol oxidoreductase subunit beta (acoB).